The following is a 364-amino-acid chain: MKPFPRAEISSRALKANLKRLRQIAPGSKVMAVVKANGYGHGLLNVAEVLTDAHSNADADGFGLARLEEALEVRAGGVSARLLLLEGFFRSEDLPLLVEHDIDTVVHHVSQLDMLESVSLSKPVTVWLKIDSGMHRLGFHASEFKDVYQRLQQNPNVAKPVHLMTHFSCADEPQKDFTATQMAHFNALTQGLPGDRTLANSAGVLYWPQSQADWIRPGIALYGVSPVAGDLGSNHGLEPAMELVSQLIAVREHSAGESVGYGAYWTASRDTRLGVVAIGYGDGYPRNAPEGTPVLVNGRRVPIVGRVSMDMLTVDLGPDAADKVGDRALLWGKELPVEEVAERIGTIAYELVTKLTPRVAVCLD.

The active-site Proton acceptor; specific for D-alanine is the Lys-35. Lys-35 carries the N6-(pyridoxal phosphate)lysine modification. Arg-136 is a substrate binding site. Tyr-261 serves as the catalytic Proton acceptor; specific for L-alanine. A substrate-binding site is contributed by Met-309.

This sequence belongs to the alanine racemase family. Pyridoxal 5'-phosphate serves as cofactor.

The enzyme catalyses L-alanine = D-alanine. The protein operates within amino-acid biosynthesis; D-alanine biosynthesis; D-alanine from L-alanine: step 1/1. Its function is as follows. Catalyzes the interconversion of L-alanine and D-alanine. May also act on other amino acids. This is Alanine racemase (alr) from Shewanella amazonensis (strain ATCC BAA-1098 / SB2B).